Reading from the N-terminus, the 583-residue chain is Ras-specific guanine nucleotide-releasing factor RalGPS2 (583 aa).

Residues 49-287 (TPEEYAGQIT…YKLSLKIEPG (239 aa)) form the Ras-GEF domain. The disordered stretch occupies residues 283–314 (KIEPGTSTPRSAASREDLVGPEVGASPQSGRK). Phosphoserine occurs at positions 293, 296, 308, and 311. The PXXP signature appears at 324–327 (PQTP). A Phosphothreonine modification is found at T326. Phosphoserine is present on residues S329 and S343. A Phosphothreonine modification is found at T361. The disordered stretch occupies residues 372–406 (DDSVMEPHAPSRGQAESSTLSSGISIGSSDGSELS). S374 bears the Phosphoserine mark. Low complexity predominate over residues 387–403 (ESSTLSSGISIGSSDGS). Phosphoserine is present on S422. In terms of domain architecture, PH spans 457-569 (AVTIQGVLRR…WFKHLSAACQ (113 aa)). The segment at 459 to 583 (TIQGVLRRKT…QVPTNLMTFE (125 aa)) is required for stimulation of nucleotide exchange by RALA.

As to quaternary structure, interacts with the SH3 domains of GRB2 and PLCG1. Interacts with RALA.

Its subcellular location is the cytoplasm. It localises to the cell membrane. Functionally, guanine nucleotide exchange factor for the small GTPase RALA. May be involved in cytoskeletal organization. May also be involved in the stimulation of transcription in a Ras-independent fashion. This Homo sapiens (Human) protein is Ras-specific guanine nucleotide-releasing factor RalGPS2 (RALGPS2).